The following is a 1220-amino-acid chain: Cullin-associated NEDD8-dissociated protein 1 (1220 aa).

HEAT repeat units follow at residues M1–H35, E42–Q79, F121–I157, A259–V295, L365–R410, I615–D650, T680–E700, S701–L737, K738–K775, F810–K847, L850–K887, and E1020–V1057.

It belongs to the CAND family.

It localises to the nucleus. In terms of biological role, key assembly factor of SCF (SKP1-CUL1-F-box protein) E3 ubiquitin ligase complexes that promotes the exchange of the substrate-recognition F-box subunit in SCF complexes, thereby playing a key role in the cellular repertoire of SCF complexes. Acts as a F-box protein exchange factor. The protein is Cullin-associated NEDD8-dissociated protein 1 (knd1) of Schizosaccharomyces pombe (strain 972 / ATCC 24843) (Fission yeast).